A 152-amino-acid chain; its full sequence is Small ribosomal subunit protein uS8m (152 aa).

The protein belongs to the universal ribosomal protein uS8 family. In terms of assembly, component of the mitochondrial small ribosomal subunit (mt-SSU). Mature yeast 74S mitochondrial ribosomes consist of a small (37S) and a large (54S) subunit. The 37S small subunit contains a 15S ribosomal RNA (15S mt-rRNA) and at least 32 different proteins. The 54S large subunit contains a 21S rRNA (21S mt-rRNA) and at least 45 different proteins.

Its subcellular location is the mitochondrion. In terms of biological role, component of the mitochondrial ribosome (mitoribosome), a dedicated translation machinery responsible for the synthesis of mitochondrial genome-encoded proteins, including at least some of the essential transmembrane subunits of the mitochondrial respiratory chain. The mitoribosomes are attached to the mitochondrial inner membrane and translation products are cotranslationally integrated into the membrane. The chain is Small ribosomal subunit protein uS8m (mrps8) from Schizosaccharomyces pombe (strain 972 / ATCC 24843) (Fission yeast).